The chain runs to 521 residues: Bifunctional dihydrofolate reductase-thymidylate synthase (521 aa).

A DHFR domain is found at 17–194 (NYQVVVAGTR…IRHSFVSFVR (178 aa)). V21 provides a ligand contact to substrate. Residues A23 and 29 to 35 (GIGKDGV) each bind NADP(+). Position 43 (D43) interacts with substrate. NADP(+)-binding positions include 67-69 (RKT) and 88-91 (LTRS). I130 is a binding site for substrate. 131–138 (GGGQVLRE) lines the NADP(+) pocket. T151 contributes to the substrate binding site. The tract at residues 197 to 521 (KSVAETHESN…HQKIEMKMAV (325 aa)) is thymidylate synthase. R258 serves as a coordination point for dUMP. The active site involves C403. DUMP contacts are provided by residues H404, 422–426 (QRSAD), N434, and 464–466 (HVY).

This sequence in the N-terminal section; belongs to the dihydrofolate reductase family. In the C-terminal section; belongs to the thymidylate synthase family.

The catalysed reaction is (6S)-5,6,7,8-tetrahydrofolate + NADP(+) = 7,8-dihydrofolate + NADPH + H(+). The enzyme catalyses dUMP + (6R)-5,10-methylene-5,6,7,8-tetrahydrofolate = 7,8-dihydrofolate + dTMP. The protein operates within cofactor biosynthesis; tetrahydrofolate biosynthesis; 5,6,7,8-tetrahydrofolate from 7,8-dihydrofolate: step 1/1. Functionally, bifunctional enzyme. Involved in de novo dTMP biosynthesis. Key enzyme in folate metabolism. Can play two different roles depending on the source of dihydrofolate: de novo synthesis of tetrahydrofolate or recycling of the dihydrofolate released as one of the end products of the TS catalyzed reaction. Catalyzes an essential reaction for de novo glycine and purine synthesis, DNA precursor synthesis, and for the conversion of dUMP to dTMP. The chain is Bifunctional dihydrofolate reductase-thymidylate synthase (DRTS) from Zea mays (Maize).